A 101-amino-acid polypeptide reads, in one-letter code: Phosphoribosyl-AMP cyclohydrolase (101 aa).

Asp71 provides a ligand contact to Mg(2+). Residue Cys72 coordinates Zn(2+). Residues Asp73 and Asp75 each coordinate Mg(2+). Residues Cys88 and Cys95 each contribute to the Zn(2+) site.

Belongs to the PRA-CH family. As to quaternary structure, homodimer. Requires Mg(2+) as cofactor. It depends on Zn(2+) as a cofactor.

Its subcellular location is the cytoplasm. It catalyses the reaction 1-(5-phospho-beta-D-ribosyl)-5'-AMP + H2O = 1-(5-phospho-beta-D-ribosyl)-5-[(5-phospho-beta-D-ribosylamino)methylideneamino]imidazole-4-carboxamide. The protein operates within amino-acid biosynthesis; L-histidine biosynthesis; L-histidine from 5-phospho-alpha-D-ribose 1-diphosphate: step 3/9. In terms of biological role, catalyzes the hydrolysis of the adenine ring of phosphoribosyl-AMP. In Bacillus cereus (strain B4264), this protein is Phosphoribosyl-AMP cyclohydrolase.